A 511-amino-acid polypeptide reads, in one-letter code: Coiled-coil domain-containing protein 125 (511 aa).

The span at 1–12 (MSKVARSSSESD) shows a compositional bias: polar residues. A disordered region spans residues 1–110 (MSKVARSSSE…TVDSNSELSN (110 aa)). Residues 43–54 (EFSHRSRKRSDG) are compositionally biased toward basic and acidic residues. Positions 83-108 (QDTFPQVSRISNYRRQSSTVDSNSEL) are enriched in polar residues. Coiled coils occupy residues 105–243 (NSEL…LEAL) and 293–325 (RMAA…MADA). S504 bears the Phosphoserine mark.

Its subcellular location is the cytoplasm. In terms of biological role, may be involved in the regulation of cell migration. The polypeptide is Coiled-coil domain-containing protein 125 (CCDC125) (Homo sapiens (Human)).